A 514-amino-acid chain; its full sequence is Maturase K (514 aa).

Belongs to the intron maturase 2 family. MatK subfamily.

It is found in the plastid. The protein localises to the chloroplast. Functionally, usually encoded in the trnK tRNA gene intron. Probably assists in splicing its own and other chloroplast group II introns. In Plantago argentea (Silver plantain), this protein is Maturase K.